A 64-amino-acid polypeptide reads, in one-letter code: Large ribosomal subunit protein bL28C (64 aa).

This sequence belongs to the bacterial ribosomal protein bL28 family.

The chain is Large ribosomal subunit protein bL28C from Mycobacterium tuberculosis (strain ATCC 25618 / H37Rv).